The primary structure comprises 197 residues: Probable GTP-binding protein EngB (197 aa).

The region spanning 22-195 (ELPEVALAGR…WKAIYALITE (174 aa)) is the EngB-type G domain. GTP contacts are provided by residues 30–37 (GRSNVGKS), 57–61 (GKTQT), 75–78 (DVPG), 142–145 (TKLD), and 174–176 (FSA). Mg(2+) is bound by residues S37 and T59.

This sequence belongs to the TRAFAC class TrmE-Era-EngA-EngB-Septin-like GTPase superfamily. EngB GTPase family. It depends on Mg(2+) as a cofactor.

In terms of biological role, necessary for normal cell division and for the maintenance of normal septation. The sequence is that of Probable GTP-binding protein EngB from Exiguobacterium sp. (strain ATCC BAA-1283 / AT1b).